Consider the following 661-residue polypeptide: Galactan 5-O-arabinofuranosyltransferase (661 aa).

Transmembrane regions (helical) follow at residues 26 to 46 (LVAI…LWMG), 64 to 84 (VASA…WLWL), 108 to 128 (ALTY…VLAI), 194 to 214 (AFQP…VPVW), 217 to 237 (ITGS…IILA), 243 to 263 (PYAA…SRIA), 265 to 285 (GDKF…TFYT), 286 to 306 (LFTG…AAIV), 312 to 332 (PLLW…ISWG), 362 to 382 (VPFL…IYLV), 393 to 413 (MWVG…ITLL), 418 to 438 (LGFR…VLGI), and 458 to 478 (TATH…LYYA).

This sequence belongs to the glycosyltransferase 85 family.

The protein resides in the cell membrane. It catalyses the reaction Adds an alpha-D-arabinofuranosyl group from trans,octacis-decaprenylphospho-beta-D-arabinofuranose at the 5-O-position of the eighth, tenth and twelfth galactofuranose unit of the galactofuranan chain of [beta-D-galactofuranosyl-(1-&gt;5)-beta-D-galactofuranosyl-(1-&gt;6)]14-beta-D-galactofuranosyl-(1-&gt;5)-beta-D-galactofuranosyl-(1-&gt;4)-alpha-L-rhamnopyranosyl-(1-&gt;3)-N-acetyl-alpha-D-glucosaminyl-diphospho-trans,octacis-decaprenol.. It functions in the pathway cell wall biogenesis; cell wall polysaccharide biosynthesis. Its function is as follows. Involved in the biosynthesis of the arabinogalactan (AG) region of the mycolylarabinogalactan-peptidoglycan (mAGP) complex, an essential component of the cell wall. Catalyzes the addition of the first key arabinofuranosyl (Araf) residue from the sugar donor decaprenyl-phospho-arabinose (DPA) on the C-5 of a 6-linked galactofuranosyl (Galf) of the galactan domain, thus 'priming' the galactan for further elaboration by other arabinofuranosyltransferases. This Corynebacterium glutamicum (strain ATCC 13032 / DSM 20300 / JCM 1318 / BCRC 11384 / CCUG 27702 / LMG 3730 / NBRC 12168 / NCIMB 10025 / NRRL B-2784 / 534) protein is Galactan 5-O-arabinofuranosyltransferase.